Consider the following 981-residue polypeptide: Mediator of RNA polymerase II transcription subunit 5 (981 aa).

This sequence belongs to the Mediator complex subunit 5 family. As to quaternary structure, component of the Mediator complex.

The protein localises to the nucleus. In terms of biological role, component of the Mediator complex, a coactivator involved in the regulated transcription of nearly all RNA polymerase II-dependent genes. Mediator functions as a bridge to convey information from gene-specific regulatory proteins to the basal RNA polymerase II transcription machinery. Mediator is recruited to promoters by direct interactions with regulatory proteins and serves as a scaffold for the assembly of a functional preinitiation complex with RNA polymerase II and the general transcription factors. This Scheffersomyces stipitis (strain ATCC 58785 / CBS 6054 / NBRC 10063 / NRRL Y-11545) (Yeast) protein is Mediator of RNA polymerase II transcription subunit 5 (NUT1).